A 1463-amino-acid polypeptide reads, in one-letter code: Clustered mitochondria protein homolog (1463 aa).

The tract at residues 1 to 79 is disordered; the sequence is MAKNKKQNGK…ETEQQQQQQE (79 aa). The segment covering 10–22 has biased composition (low complexity); that stretch reads KAKTPPVVAAAAG. The 243-residue stretch at 374–616 folds into the Clu domain; the sequence is RAEDTFSSKL…RTFPPDVNFL (243 aa). 3 disordered regions span residues 684 to 753, 942 to 988, and 1387 to 1463; these read AQKT…SEDA, GDGQ…SVPS, and QKEA…RRKS. Positions 692-702 are enriched in low complexity; it reads KQAAIEAAAPA. A compositionally biased stretch (basic and acidic residues) spans 703–731; sequence EGDKTPAKDAKDGKEAGKDANDGKEEGST. The span at 955-964 shows a compositional bias: basic residues; it reads GGKKQNKQSK. The segment covering 965-980 has biased composition (gly residues); it reads RGGGGGGGKGAAGGGR. Over residues 1438–1456 the composition is skewed to low complexity; the sequence is AEAASHTAGGAAANTAAPA.

The protein belongs to the CLU family.

It is found in the cytoplasm. Functionally, mRNA-binding protein involved in proper cytoplasmic distribution of mitochondria. In Anopheles gambiae (African malaria mosquito), this protein is Clustered mitochondria protein homolog.